The sequence spans 507 residues: MAQNDHETVDMLLVGAGIMSATLAVLLKELDPNLKMEVVELQESGAIESSNPWNNAGTGHAGLCELNYTPQSADGSIDIKKAVGINTMFEVSKQFWSHLVAKGTFGSPKTFINPVPHLSFVRGSEGIAYLKKRFESLTKHHAFETMVYSEDKATLAEWMPLMMPGRPADEAIAATRVEGGTDVNFGALTNQLLQHLAQQPGAQIRYNQKVTHLRRADNGWRVTVKDTRNGGDREIQARFVFLGAGGGALPLLQLSGIPEGKGFGGFPVSGQWLRCDNPEIVKQHQAKVYSQAEVGSPPMSVPHLDTRVVDGKKSLLFGPYAGFSTKFLRHGSFLDLPLSVRPGNILPMLSVARDNMDLTRYLIGQVMQSPEQRLEALRKFYPEARAEDWRLEVAGQRVQIIKKDPKKGGILQFGTELVAAHDGSIAALLGASPGASVTVSIMLGLIERCFPEQARSPEWSAKLKEIFPAREKELESDAELYRSVSSRCSEVLELTAKNDVQAPVNAE.

It belongs to the MQO family. The cofactor is FAD.

The catalysed reaction is (S)-malate + a quinone = a quinol + oxaloacetate. It functions in the pathway carbohydrate metabolism; tricarboxylic acid cycle; oxaloacetate from (S)-malate (quinone route): step 1/1. The protein is Probable malate:quinone oxidoreductase 2 of Pseudomonas aeruginosa (strain ATCC 15692 / DSM 22644 / CIP 104116 / JCM 14847 / LMG 12228 / 1C / PRS 101 / PAO1).